Consider the following 239-residue polypeptide: Ribonuclease HII (239 aa).

One can recognise an RNase H type-2 domain in the interval 30–221; it reads GPVAGVDEVG…VRRLVTAGTP (192 aa). Residues aspartate 36, glutamate 37, and aspartate 130 each contribute to the a divalent metal cation site.

It belongs to the RNase HII family. Mn(2+) is required as a cofactor. Requires Mg(2+) as cofactor.

The protein localises to the cytoplasm. It carries out the reaction Endonucleolytic cleavage to 5'-phosphomonoester.. Functionally, endonuclease that specifically degrades the RNA of RNA-DNA hybrids. This chain is Ribonuclease HII, found in Mycobacterium sp. (strain KMS).